A 445-amino-acid polypeptide reads, in one-letter code: UPF0210 protein Sez_0396 (445 aa).

It belongs to the UPF0210 family. In terms of assembly, homodimer.

This is UPF0210 protein Sez_0396 from Streptococcus equi subsp. zooepidemicus (strain MGCS10565).